The following is a 463-amino-acid chain: Steroidogenic factor 1 (463 aa).

The segment at residues 10-85 (DELCPVCGDK…VGMRLEAVRA (76 aa)) is a DNA-binding region (nuclear receptor). Residues 13 to 33 (CPVCGDKVSGYHYGLLTCESC) form an NR C4-type zinc finger. N6-acetyllysine occurs at positions 34, 38, and 72. An NR C4-type zinc finger spans residues 49–73 (CTESQNCKIDKTQRKRCPYCRFQKC). K119 participates in a covalent cross-link: Glycyl lysine isopeptide (Lys-Gly) (interchain with G-Cter in SUMO). The disordered stretch occupies residues 119–160 (KLETGPSMGPPPQTDYPLAPALHPGAKGLAPAPPAGPPGDYE). Positions 135 to 148 (PLAPALHPGAKGLA) are enriched in low complexity. A Glycyl lysine isopeptide (Lys-Gly) (interchain with G-Cter in SUMO) cross-link involves residue K193. The tract at residues 197–216 (PEPYASPHEPAPPYGYPEPY) is disordered. The residue at position 202 (S202) is a Phosphoserine; by CDK7. A compositionally biased stretch (pro residues) spans 205 to 216 (EPAPPYGYPEPY). Residues 224 to 461 (GVPELILKLL…NLLIEMLHAK (238 aa)) enclose the NR LBD domain. The a 1,2-diacyl-sn-glycero-3-phosphocholine site is built by G343, Y438, and K442.

The protein belongs to the nuclear hormone receptor family. NR5 subfamily. In terms of assembly, binds DNA as a monomer. Part of a complex consisting of SFPQ, NONO and NR5A1. Interacts with NR0B2, NCOA2 and PPARGC1A. Interacts with DGKQ and CDK7. Binds to and activated by HIPK3. Post-translationally, acetylation stimulates the transcriptional activity. Sumoylation reduces CDK7-mediated phosphorylation on Ser-202. In terms of processing, phosphorylated on Ser-202 by CDK7. This phosphorylation promotes transcriptional activity. In terms of tissue distribution, expressed in the pre-granulosa and Sertoli cells of the ovary and testis, respectively. In the testis it is also present in the interstitial cells. In the adult ovary it is expressed in the interstitial gland, and in the granulosa cells and theca interna of small to medium-sized antral follicles, but is not expressed in large antral follicles.

Its subcellular location is the nucleus. In terms of biological role, transcriptional activator. Seems to be essential for sexual differentiation and formation of the primary steroidogenic tissues. Binds to the Ad4 site found in the promoter region of steroidogenic P450 genes such as CYP11A, CYP11B and CYP21B. Also regulates the AMH/Muellerian inhibiting substance gene as well as the AHCH and STAR genes. 5'-YCAAGGYC-3' and 5'-RRAGGTCA-3' are the consensus sequences for the recognition by NR5A1. The SFPQ-NONO-NR5A1 complex binds to the CYP17 promoter and regulates basal and cAMP-dependent transcriptional activity. Binds phosphatidylcholine and phospholipids with a phosphatidylinositol (PI) headgroup, in particular PI(3,4)P2 and PI(3,4,5)P3. Activated by the phosphorylation of NR5A1 by HIPK3 leading to increased steroidogenic gene expression upon cAMP signaling pathway stimulation. This Notamacropus eugenii (Tammar wallaby) protein is Steroidogenic factor 1 (NR5A1).